The primary structure comprises 382 residues: Dual-specificity RNA methyltransferase RlmN (382 aa).

Catalysis depends on Glu96, which acts as the Proton acceptor. The region spanning 102-342 (QGKRGTLCVS…VRTTRGEDID (241 aa)) is the Radical SAM core domain. Cys109 and Cys345 are oxidised to a cystine. [4Fe-4S] cluster contacts are provided by Cys116, Cys120, and Cys123. Residues 170 to 171 (GE), Ser202, 224 to 226 (SLH), and Asn302 each bind S-adenosyl-L-methionine. The S-methylcysteine intermediate role is filled by Cys345.

This sequence belongs to the radical SAM superfamily. RlmN family. The cofactor is [4Fe-4S] cluster.

The protein resides in the cytoplasm. The enzyme catalyses adenosine(2503) in 23S rRNA + 2 reduced [2Fe-2S]-[ferredoxin] + 2 S-adenosyl-L-methionine = 2-methyladenosine(2503) in 23S rRNA + 5'-deoxyadenosine + L-methionine + 2 oxidized [2Fe-2S]-[ferredoxin] + S-adenosyl-L-homocysteine. It carries out the reaction adenosine(37) in tRNA + 2 reduced [2Fe-2S]-[ferredoxin] + 2 S-adenosyl-L-methionine = 2-methyladenosine(37) in tRNA + 5'-deoxyadenosine + L-methionine + 2 oxidized [2Fe-2S]-[ferredoxin] + S-adenosyl-L-homocysteine. Its function is as follows. Specifically methylates position 2 of adenine 2503 in 23S rRNA and position 2 of adenine 37 in tRNAs. m2A2503 modification seems to play a crucial role in the proofreading step occurring at the peptidyl transferase center and thus would serve to optimize ribosomal fidelity. The polypeptide is Dual-specificity RNA methyltransferase RlmN (Pseudomonas fluorescens (strain SBW25)).